A 209-amino-acid chain; its full sequence is Glutathione S-transferase F7 (209 aa).

Positions 2-83 (AGIKVFGHPA…YIAHFYSDKG (82 aa)) constitute a GST N-terminal domain. Glutathione contacts are provided by residues 12–13 (ST), 41–42 (HK), 54–55 (KV), and 67–68 (ES). Residues 90–209 (GSKDIAGIAM…TSRPSAKKVL (120 aa)) form the GST C-terminal domain.

Belongs to the GST superfamily. Phi family.

The protein localises to the cytoplasm. The protein resides in the cytosol. It carries out the reaction RX + glutathione = an S-substituted glutathione + a halide anion + H(+). Functionally, may be involved in the conjugation of reduced glutathione to a wide number of exogenous and endogenous hydrophobic electrophiles and have a detoxification role against certain herbicides. This Arabidopsis thaliana (Mouse-ear cress) protein is Glutathione S-transferase F7.